The sequence spans 124 residues: Small ribosomal subunit protein uS12 (124 aa).

The protein belongs to the universal ribosomal protein uS12 family. As to quaternary structure, part of the 30S ribosomal subunit. Contacts proteins S8 and S17. May interact with IF1 in the 30S initiation complex.

In terms of biological role, with S4 and S5 plays an important role in translational accuracy. Its function is as follows. Interacts with and stabilizes bases of the 16S rRNA that are involved in tRNA selection in the A site and with the mRNA backbone. Located at the interface of the 30S and 50S subunits, it traverses the body of the 30S subunit contacting proteins on the other side and probably holding the rRNA structure together. The combined cluster of proteins S8, S12 and S17 appears to hold together the shoulder and platform of the 30S subunit. This is Small ribosomal subunit protein uS12 from Photorhabdus laumondii subsp. laumondii (strain DSM 15139 / CIP 105565 / TT01) (Photorhabdus luminescens subsp. laumondii).